The chain runs to 669 residues: Coagulation factor XIII B chain (669 aa).

A signal peptide spans 1–21 (MMTLRHLPFILLLILSGELYA). Sushi domains are found at residues 25–89 (QCDF…PRCY), 90–149 (KKCL…SCRK), 152–211 (ETCL…QCNK), 212–270 (LMCS…ICEG), 273–330 (NRCP…KCIE), 335–392 (VACE…ECVE), 395–453 (ENCK…VCLE), 454–517 (PCTI…PMCI), 523–581 (GMCA…SCLE), and 582–648 (PCTL…PKCT). 20 disulfides stabilise this stretch: Cys26/Cys77, Cys60/Cys88, Cys92/Cys136, Cys119/Cys147, Cys154/Cys198, Cys181/Cys209, Cys214/Cys256, Cys242/Cys268, Cys275/Cys317, Cys303/Cys328, Cys337/Cys379, Cys365/Cys390, Cys397/Cys440, Cys426/Cys451, Cys455/Cys506, Cys487/Cys516, Cys525/Cys568, Cys554/Cys579, Cys583/Cys637, and Cys617/Cys647. Asn163 carries an N-linked (GlcNAc...) asparagine glycan. A glycan (N-linked (GlcNAc...) asparagine) is linked at Asn546.

In terms of assembly, tetramer of two A chains (F13A1) and two B (F13B) chains. Predominantly expressed in liver and kidney.

The protein localises to the secreted. Its function is as follows. The B chain of factor XIII is not catalytically active, but is thought to stabilize the A subunits and regulate the rate of transglutaminase formation by thrombin. This chain is Coagulation factor XIII B chain (F13b), found in Mus musculus (Mouse).